The primary structure comprises 567 residues: MKQSKVFIPTMREVPAEAEALSHRLLLKAGLIKQSTSGIYSYLPLATRVLNNISKIIREEMESIDAVEILMPALQQAELWEESGRWSAYGPELMRLKDRNGREFALGPTHEEVVTSLVRDELKSYKQLPLTLFQIQSKYRDEKRPRFGLLRGREFLMKDAYSFHSDEASLDATYQDMYQAYSRIFKRVGINARPVVADSGAIGGSHTHEFMALSEIGEDTIVYSNESDYAANIEKAEVVYHPSHKHSALAELTKVETPNVKTAQEVAEYLKRPLDEIVKTMIFKIDGEFIMFLVRGHHELNEVKLKSYFGTEHVEMATPDEIVNLVDANPGSLGPIFDKDIKIYADNYLQDLNNFVVGANEDHYHYINVNIGRDFDVTEYGDFRFITQGEMLSDGSGVAQFAEGIEVGQVFKLGTKYSESMNATFLDNQGKAQPLIMGCYGIGVSRTLSAIVEQNNDENGIIWPKSVTPFDIHLITINPKKDDQRTLGDQLYQKLMDSYDVLYDDRKERAGVKFNDSDLIGLPVRVVVGKRAEEGIVEVKQRINGLSEEVQIDELEYYLQELFKNIK.

It belongs to the class-II aminoacyl-tRNA synthetase family. ProS type 1 subfamily. Homodimer.

Its subcellular location is the cytoplasm. The enzyme catalyses tRNA(Pro) + L-proline + ATP = L-prolyl-tRNA(Pro) + AMP + diphosphate. Functionally, catalyzes the attachment of proline to tRNA(Pro) in a two-step reaction: proline is first activated by ATP to form Pro-AMP and then transferred to the acceptor end of tRNA(Pro). As ProRS can inadvertently accommodate and process non-cognate amino acids such as alanine and cysteine, to avoid such errors it has two additional distinct editing activities against alanine. One activity is designated as 'pretransfer' editing and involves the tRNA(Pro)-independent hydrolysis of activated Ala-AMP. The other activity is designated 'posttransfer' editing and involves deacylation of mischarged Ala-tRNA(Pro). The misacylated Cys-tRNA(Pro) is not edited by ProRS. The polypeptide is Proline--tRNA ligase (Staphylococcus epidermidis (strain ATCC 35984 / DSM 28319 / BCRC 17069 / CCUG 31568 / BM 3577 / RP62A)).